The primary structure comprises 510 residues: Histidine ammonia-lyase (510 aa).

Positions 143-145 (ASG) form a cross-link, 5-imidazolinone (Ala-Gly). At S144 the chain carries 2,3-didehydroalanine (Ser).

Belongs to the PAL/histidase family. Contains an active site 4-methylidene-imidazol-5-one (MIO), which is formed autocatalytically by cyclization and dehydration of residues Ala-Ser-Gly.

Its subcellular location is the cytoplasm. It carries out the reaction L-histidine = trans-urocanate + NH4(+). The protein operates within amino-acid degradation; L-histidine degradation into L-glutamate; N-formimidoyl-L-glutamate from L-histidine: step 1/3. The sequence is that of Histidine ammonia-lyase from Yersinia pseudotuberculosis serotype I (strain IP32953).